The sequence spans 660 residues: Translation factor GUF1 homolog, mitochondrial (660 aa).

In terms of domain architecture, tr-type G spans Glu-62–Thr-243. GTP-binding positions include Ala-71 to Ser-78, Asp-136 to His-140, and Asn-190 to Asp-193.

This sequence belongs to the TRAFAC class translation factor GTPase superfamily. Classic translation factor GTPase family. LepA subfamily.

It localises to the mitochondrion inner membrane. The enzyme catalyses GTP + H2O = GDP + phosphate + H(+). Its function is as follows. Promotes mitochondrial protein synthesis. May act as a fidelity factor of the translation reaction, by catalyzing a one-codon backward translocation of tRNAs on improperly translocated ribosomes. Binds to mitochondrial ribosomes in a GTP-dependent manner. This chain is Translation factor GUF1 homolog, mitochondrial, found in Trichoplax adhaerens (Trichoplax reptans).